We begin with the raw amino-acid sequence, 484 residues long: Trigger factor (484 aa).

Residues 165–244 form the PPIase FKBP-type domain; sequence GDFVQIDLTA…VQSVKERELP (80 aa). Residues 429 to 484 form a disordered region; the sequence is DAVSEEPADADAEAVVADAPAEEAAEAPAAEEAPAEKPKKKAPAKKKASEKAADSE. Residues 430–440 show a composition bias toward acidic residues; sequence AVSEEPADADA. Positions 475 to 484 are enriched in basic and acidic residues; that stretch reads KASEKAADSE.

The protein belongs to the FKBP-type PPIase family. Tig subfamily.

Its subcellular location is the cytoplasm. It carries out the reaction [protein]-peptidylproline (omega=180) = [protein]-peptidylproline (omega=0). Functionally, involved in protein export. Acts as a chaperone by maintaining the newly synthesized protein in an open conformation. Functions as a peptidyl-prolyl cis-trans isomerase. The protein is Trigger factor of Clavibacter michiganensis subsp. michiganensis (strain NCPPB 382).